Here is a 357-residue protein sequence, read N- to C-terminus: MPIVAHNDLPTFARLREEGQQILDPDFALHQDIRELHIGLLNMMPDAALAATERQFFRLIGESNQIAQFYVHPFTLKELERGPEARAHVERYYQSFDQIRADGLDALIITGANVTGPDLALEPFWEPLIEVVDWAYDNVCSTLCSCLATHAVMQFRYGERRRRLPAKRWGVFPHRVLARTHPLVADVNTCFDVPHSRFNDISHAQFVGAGLHVLVESEEAGVHLAVSPDGFRQVFFQGHPEYDTISLLKEYKREVGRFAAGARSDYPPFPDNYFGLQTRAILNEHRECVIRALDQGRKPPELPERLIAAALHNTWHDTAEGVIGNWMGLIYQITHHDRRQTFMAGIDPNDPLGLCCG.

The active-site Acyl-thioester intermediate is the C146. Residues K167 and S196 each contribute to the substrate site. H239 serves as the catalytic Proton acceptor. The active site involves E241. R253 lines the substrate pocket.

This sequence belongs to the MetA family.

The protein localises to the cytoplasm. It carries out the reaction L-homoserine + succinyl-CoA = O-succinyl-L-homoserine + CoA. The protein operates within amino-acid biosynthesis; L-methionine biosynthesis via de novo pathway; O-succinyl-L-homoserine from L-homoserine: step 1/1. Functionally, transfers a succinyl group from succinyl-CoA to L-homoserine, forming succinyl-L-homoserine. This chain is Homoserine O-succinyltransferase, found in Allochromatium vinosum (strain ATCC 17899 / DSM 180 / NBRC 103801 / NCIMB 10441 / D) (Chromatium vinosum).